The chain runs to 239 residues: Phosphoribosylaminoimidazole-succinocarboxamide synthase (239 aa).

It belongs to the SAICAR synthetase family.

It carries out the reaction 5-amino-1-(5-phospho-D-ribosyl)imidazole-4-carboxylate + L-aspartate + ATP = (2S)-2-[5-amino-1-(5-phospho-beta-D-ribosyl)imidazole-4-carboxamido]succinate + ADP + phosphate + 2 H(+). The protein operates within purine metabolism; IMP biosynthesis via de novo pathway; 5-amino-1-(5-phospho-D-ribosyl)imidazole-4-carboxamide from 5-amino-1-(5-phospho-D-ribosyl)imidazole-4-carboxylate: step 1/2. This chain is Phosphoribosylaminoimidazole-succinocarboxamide synthase, found in Nitratiruptor sp. (strain SB155-2).